The sequence spans 283 residues: Hydrogenase expression/formation protein HoxQ (283 aa).

The interval 1-29 (MNDDLPILPPGFGPGSHGEEERPDCPSMP) is disordered.

The protein belongs to the HupH/HyaF family.

The sequence is that of Hydrogenase expression/formation protein HoxQ (hoxQ) from Azotobacter vinelandii.